The sequence spans 38 residues: Allatostatin-C (38 aa).

A propeptide spanning residues 1–19 (MRRALDGPGSSSLDTRQAD) is cleaved from the precursor. Position 22 is a pyrrolidone carboxylic acid; partial (glutamine 22).

The protein belongs to the allatostatin family. In terms of tissue distribution, in its non-pyroglutamate form, expressed in antennal lobe (AL), corpora cardiaca (CC), corpora allata (CA) and gnathal ganglion (GNG) with expression in AL detected in most animals and expression in CC, CA and GNG detected in few animals (at protein level). In its pyroglutamate form, expressed in antennal lobe (AL), corpora cardiaca (CC) and corpora allata (CA) with expression detected in few animals (at protein level). Not expressed in GNG (protein level).

It localises to the secreted. In terms of biological role, strongly inhibits juvenile hormone biosynthesis. This is Allatostatin-C from Agrotis ipsilon (Black cutworm moth).